Consider the following 190-residue polypeptide: Large ribosomal subunit protein uL10 (190 aa).

A disordered region spans residues alanine 170 to alanine 190.

Belongs to the universal ribosomal protein uL10 family. Part of the ribosomal stalk of the 50S ribosomal subunit. The N-terminus interacts with L11 and the large rRNA to form the base of the stalk. The C-terminus forms an elongated spine to which L12 dimers bind in a sequential fashion forming a multimeric L10(L12)X complex.

Forms part of the ribosomal stalk, playing a central role in the interaction of the ribosome with GTP-bound translation factors. This Kineococcus radiotolerans (strain ATCC BAA-149 / DSM 14245 / SRS30216) protein is Large ribosomal subunit protein uL10.